A 111-amino-acid polypeptide reads, in one-letter code: Nucleoid-associated protein lhv_0401 (111 aa).

It belongs to the YbaB/EbfC family. Homodimer.

The protein localises to the cytoplasm. It is found in the nucleoid. Its function is as follows. Binds to DNA and alters its conformation. May be involved in regulation of gene expression, nucleoid organization and DNA protection. This Lactobacillus helveticus (strain DPC 4571) protein is Nucleoid-associated protein lhv_0401.